An 886-amino-acid chain; its full sequence is Valine--tRNA ligase (886 aa).

Residues 43–53 (PYPTGRMHLGH) carry the 'HIGH' region motif. Positions 528 to 532 (KMSKS) match the 'KMSKS' region motif. Lysine 531 is an ATP binding site.

Belongs to the class-I aminoacyl-tRNA synthetase family. ValS type 2 subfamily.

Its subcellular location is the cytoplasm. It carries out the reaction tRNA(Val) + L-valine + ATP = L-valyl-tRNA(Val) + AMP + diphosphate. In terms of biological role, catalyzes the attachment of valine to tRNA(Val). As ValRS can inadvertently accommodate and process structurally similar amino acids such as threonine, to avoid such errors, it has a 'posttransfer' editing activity that hydrolyzes mischarged Thr-tRNA(Val) in a tRNA-dependent manner. The chain is Valine--tRNA ligase from Methanococcus maripaludis (strain DSM 14266 / JCM 13030 / NBRC 101832 / S2 / LL).